The following is a 705-amino-acid chain: Elongation factor G (705 aa).

The tr-type G domain maps to Asn8–Leu294. Residues Ala17 to Thr24, Asp92 to His96, and Asn146 to Asp149 each bind GTP.

Belongs to the TRAFAC class translation factor GTPase superfamily. Classic translation factor GTPase family. EF-G/EF-2 subfamily.

It localises to the cytoplasm. Functionally, catalyzes the GTP-dependent ribosomal translocation step during translation elongation. During this step, the ribosome changes from the pre-translocational (PRE) to the post-translocational (POST) state as the newly formed A-site-bound peptidyl-tRNA and P-site-bound deacylated tRNA move to the P and E sites, respectively. Catalyzes the coordinated movement of the two tRNA molecules, the mRNA and conformational changes in the ribosome. This Ruegeria pomeroyi (strain ATCC 700808 / DSM 15171 / DSS-3) (Silicibacter pomeroyi) protein is Elongation factor G.